The following is a 508-amino-acid chain: Maturase K (508 aa).

Belongs to the intron maturase 2 family. MatK subfamily.

The protein resides in the plastid. Its subcellular location is the chloroplast. Its function is as follows. Usually encoded in the trnK tRNA gene intron. Probably assists in splicing its own and other chloroplast group II introns. The chain is Maturase K from Abrus precatorius (Indian licorice).